Here is a 489-residue protein sequence, read N- to C-terminus: Betaine aldehyde dehydrogenase (489 aa).

2 residues coordinate K(+): Thr-26 and Asp-93. 150–152 serves as a coordination point for NAD(+); that stretch reads GAW. Residue Lys-162 is the Charge relay system of the active site. 176 to 179 contributes to the NAD(+) binding site; sequence KPSE. Residue Ile-180 participates in K(+) binding. Residue 229-232 coordinates NAD(+); it reads GVET. Position 245 (Leu-245) interacts with K(+). The active-site Proton acceptor is the Glu-251. Positions 253, 285, and 386 each coordinate NAD(+). The active-site Nucleophile is the Cys-285. Cys-285 is modified (cysteine sulfenic acid (-SOH)). K(+) is bound by residues Lys-456 and Gly-459. Catalysis depends on Glu-463, which acts as the Charge relay system.

Belongs to the aldehyde dehydrogenase family. Dimer of dimers. It depends on K(+) as a cofactor.

It carries out the reaction betaine aldehyde + NAD(+) + H2O = glycine betaine + NADH + 2 H(+). Its pathway is amine and polyamine biosynthesis; betaine biosynthesis via choline pathway; betaine from betaine aldehyde: step 1/1. In terms of biological role, involved in the biosynthesis of the osmoprotectant glycine betaine. Catalyzes the irreversible oxidation of betaine aldehyde to the corresponding acid. The polypeptide is Betaine aldehyde dehydrogenase (Paraburkholderia xenovorans (strain LB400)).